A 672-amino-acid polypeptide reads, in one-letter code: Threonine--tRNA ligase (672 aa).

Positions 2–60 (SEPKNILLTVDGELREVTHGTTGLDLFREKPTTAVMRVDGLLWDLAREIPAGASVESVD) constitute a TGS domain. The segment at 260-567 (DHRKLGAELD…LTEHYAGAFP (308 aa)) is catalytic. 3 residues coordinate Zn(2+): C366, H417, and H544.

The protein belongs to the class-II aminoacyl-tRNA synthetase family. Homodimer. Zn(2+) is required as a cofactor.

It localises to the cytoplasm. It catalyses the reaction tRNA(Thr) + L-threonine + ATP = L-threonyl-tRNA(Thr) + AMP + diphosphate + H(+). Catalyzes the attachment of threonine to tRNA(Thr) in a two-step reaction: L-threonine is first activated by ATP to form Thr-AMP and then transferred to the acceptor end of tRNA(Thr). Also edits incorrectly charged L-seryl-tRNA(Thr). The protein is Threonine--tRNA ligase of Micrococcus luteus (strain ATCC 4698 / DSM 20030 / JCM 1464 / CCM 169 / CCUG 5858 / IAM 1056 / NBRC 3333 / NCIMB 9278 / NCTC 2665 / VKM Ac-2230) (Micrococcus lysodeikticus).